Reading from the N-terminus, the 788-residue chain is Endonuclease MutS2 (788 aa).

An ATP-binding site is contributed by 332–339 (GPNTGGKT). The 76-residue stretch at 713 to 788 (VDLRGMDAEE…GTGVTVVELK (76 aa)) folds into the Smr domain.

This sequence belongs to the DNA mismatch repair MutS family. MutS2 subfamily. In terms of assembly, homodimer. Binds to stalled ribosomes, contacting rRNA.

Endonuclease that is involved in the suppression of homologous recombination and thus may have a key role in the control of bacterial genetic diversity. In terms of biological role, acts as a ribosome collision sensor, splitting the ribosome into its 2 subunits. Detects stalled/collided 70S ribosomes which it binds and splits by an ATP-hydrolysis driven conformational change. Acts upstream of the ribosome quality control system (RQC), a ribosome-associated complex that mediates the extraction of incompletely synthesized nascent chains from stalled ribosomes and their subsequent degradation. Probably generates substrates for RQC. The polypeptide is Endonuclease MutS2 (Clostridium botulinum (strain Okra / Type B1)).